Consider the following 553-residue polypeptide: CTP synthase (553 aa).

The interval 1–270 (MTKYVFVTGG…DRLICEELRL (270 aa)) is amidoligase domain. Serine 13 contacts CTP. Serine 13 contacts UTP. Residues 14 to 19 (SLGKGI) and aspartate 71 contribute to the ATP site. Aspartate 71 and glutamate 144 together coordinate Mg(2+). CTP is bound by residues 151–153 (DIE), 191–196 (KTKPTQ), and lysine 227. Residues 191-196 (KTKPTQ) and lysine 227 each bind UTP. One can recognise a Glutamine amidotransferase type-1 domain in the interval 295–547 (TIGMVGKYVD…VQAALACQQT (253 aa)). Glycine 356 is an L-glutamine binding site. The active-site Nucleophile; for glutamine hydrolysis is cysteine 383. L-glutamine-binding positions include 384 to 387 (LGMQ), glutamate 407, and arginine 473. Residues histidine 520 and glutamate 522 contribute to the active site.

Belongs to the CTP synthase family. Homotetramer.

The enzyme catalyses UTP + L-glutamine + ATP + H2O = CTP + L-glutamate + ADP + phosphate + 2 H(+). The catalysed reaction is L-glutamine + H2O = L-glutamate + NH4(+). It catalyses the reaction UTP + NH4(+) + ATP = CTP + ADP + phosphate + 2 H(+). Its pathway is pyrimidine metabolism; CTP biosynthesis via de novo pathway; CTP from UDP: step 2/2. Allosterically activated by GTP, when glutamine is the substrate; GTP has no effect on the reaction when ammonia is the substrate. The allosteric effector GTP functions by stabilizing the protein conformation that binds the tetrahedral intermediate(s) formed during glutamine hydrolysis. Inhibited by the product CTP, via allosteric rather than competitive inhibition. In terms of biological role, catalyzes the ATP-dependent amination of UTP to CTP with either L-glutamine or ammonia as the source of nitrogen. Regulates intracellular CTP levels through interactions with the four ribonucleotide triphosphates. This is CTP synthase from Burkholderia mallei (strain NCTC 10229).